Reading from the N-terminus, the 276-residue chain is Myoblast determination protein 1 homolog 1 (276 aa).

Residues 84 to 135 (DRRKAATMRERRRLSKVNDAFETLKRCTSTNPNQRLPKVDILRNAISYIESL) enclose the bHLH domain. The segment at 228–253 (CPAVQDGSEGSSPCSPGDGSIASENG) is disordered.

In terms of assembly, efficient DNA binding requires dimerization with another bHLH protein.

It localises to the nucleus. Functionally, may act as a transcriptional activator that promotes transcription of muscle-specific target genes and plays a role in muscle differentiation. This Oncorhynchus mykiss (Rainbow trout) protein is Myoblast determination protein 1 homolog 1 (myod1).